We begin with the raw amino-acid sequence, 68 residues long: Conotoxin Cal12.1p3 (68 aa).

Positions 1–21 (DLITNSYTRGKPRHVTSWPKL) are excised as a propeptide.

Contains 4 disulfide bonds. Expressed by the venom duct.

The protein localises to the secreted. The chain is Conotoxin Cal12.1p3 from Californiconus californicus (California cone).